The following is a 475-amino-acid chain: Putative aldehyde dehydrogenase SERP1729 (475 aa).

201-207 contacts NAD(+); that stretch reads GDGSGVG. Active-site residues include glutamate 245 and cysteine 279.

This sequence belongs to the aldehyde dehydrogenase family.

The enzyme catalyses an aldehyde + NAD(+) + H2O = a carboxylate + NADH + 2 H(+). The chain is Putative aldehyde dehydrogenase SERP1729 from Staphylococcus epidermidis (strain ATCC 35984 / DSM 28319 / BCRC 17069 / CCUG 31568 / BM 3577 / RP62A).